A 612-amino-acid chain; its full sequence is Elongation factor 4 (612 aa).

The tr-type G domain occupies 11–193; the sequence is KHIRNFSIIA…RIVTDVPAPS (183 aa). GTP-binding positions include 23–28 and 140–143; these read DHGKST and NKVD.

This sequence belongs to the TRAFAC class translation factor GTPase superfamily. Classic translation factor GTPase family. LepA subfamily.

The protein resides in the cell membrane. The catalysed reaction is GTP + H2O = GDP + phosphate + H(+). In terms of biological role, required for accurate and efficient protein synthesis under certain stress conditions. May act as a fidelity factor of the translation reaction, by catalyzing a one-codon backward translocation of tRNAs on improperly translocated ribosomes. Back-translocation proceeds from a post-translocation (POST) complex to a pre-translocation (PRE) complex, thus giving elongation factor G a second chance to translocate the tRNAs correctly. Binds to ribosomes in a GTP-dependent manner. The chain is Elongation factor 4 from Lacticaseibacillus paracasei (strain ATCC 334 / BCRC 17002 / CCUG 31169 / CIP 107868 / KCTC 3260 / NRRL B-441) (Lactobacillus paracasei).